A 518-amino-acid chain; its full sequence is Integrator complex subunit 14 (518 aa).

Positions 2–204 (PTVVVMDVSL…KNVQSMFGKL (203 aa)) constitute a VWFA domain. The Mg(2+) site is built by Ser10, Ser12, and Thr86.

This sequence belongs to the Integrator subunit 14 family. Component of the Integrator complex, composed of core subunits INTS1, INTS2, INTS3, INTS4, INTS5, INTS6, INTS7, INTS8, INTS9/RC74, INTS10, INTS11/CPSF3L, INTS12, INTS13, INTS14 and INTS15. The core complex associates with protein phosphatase 2A subunits PPP2CA and PPP2R1A, to form the Integrator-PP2A (INTAC) complex. INTS14 is part of the tail subcomplex, composed of INTS10, INTS13, INTS14 and INTS15.

The protein resides in the nucleus. Its function is as follows. Component of the integrator complex, a multiprotein complex that terminates RNA polymerase II (Pol II) transcription in the promoter-proximal region of genes. The integrator complex provides a quality checkpoint during transcription elongation by driving premature transcription termination of transcripts that are unfavorably configured for transcriptional elongation: the complex terminates transcription by (1) catalyzing dephosphorylation of the C-terminal domain (CTD) of Pol II subunit POLR2A/RPB1 and SUPT5H/SPT5, (2) degrading the exiting nascent RNA transcript via endonuclease activity and (3) promoting the release of Pol II from bound DNA. The integrator complex is also involved in terminating the synthesis of non-coding Pol II transcripts, such as enhancer RNAs (eRNAs), small nuclear RNAs (snRNAs), telomerase RNAs and long non-coding RNAs (lncRNAs). Within the integrator complex, INTS14 is part of the integrator tail module that acts as a platform for the recruitment of transcription factors at promoters. This is Integrator complex subunit 14 from Xenopus tropicalis (Western clawed frog).